The following is a 1025-amino-acid chain: Serine/threonine-protein kinase TAO2 (1025 aa).

The Protein kinase domain maps to 28 to 281; that stretch reads FADLREIGHG…SDMLLKHRFL (254 aa). ATP-binding positions include 34–42 and lysine 57; that span reads IGHGSFGAV. The active-site Proton acceptor is aspartate 151. The segment covering 349-373 has biased composition (low complexity); it reads ESSQSVPSMSISASSQSSSVNSLAD. Residues 349 to 377 form a disordered region; that stretch reads ESSQSVPSMSISASSQSSSVNSLADASDD. 2 coiled-coil regions span residues 457–650 and 755–876; these read SALR…ECAM and ILKR…EIEA. 2 disordered regions span residues 899–930 and 945–1025; these read FNQG…QNTG and SASW…LSYS. Residues 905 to 914 show a composition bias toward pro residues; that stretch reads APPPGWPSRP. A compositionally biased stretch (low complexity) spans 947 to 986; the sequence is SWGLHPPGSSSSLSALPSSSSSSSSSPSSSSGGRPGLLLL. Polar residues predominate over residues 1007–1025; sequence SRSTSVTSQLSNGSHLSYS.

The protein belongs to the protein kinase superfamily. STE Ser/Thr protein kinase family. STE20 subfamily. It depends on Mg(2+) as a cofactor.

It carries out the reaction L-seryl-[protein] + ATP = O-phospho-L-seryl-[protein] + ADP + H(+). The catalysed reaction is L-threonyl-[protein] + ATP = O-phospho-L-threonyl-[protein] + ADP + H(+). Serine/threonine-protein kinase involved in different processes such as apoptotic morphological changes, MAPK8/JNK and MAPK14/p38 MAPK signaling pathway. Its function is as follows. Activates the JNK MAP kinase pathway. In Xenopus laevis (African clawed frog), this protein is Serine/threonine-protein kinase TAO2 (taok2).